Here is a 153-residue protein sequence, read N- to C-terminus: Gastric inhibitory polypeptide (153 aa).

Residues 1-21 (MVATKTFALLLLSLFLAVGLG) form the signal peptide. 2 propeptides span residues 22–50 (EKKE…PRGP) and 95–153 (EARA…LRSR). A disordered region spans residues 102 to 125 (ASQANRKEEEAVEPQSSPAKNPSD).

Belongs to the glucagon family.

The protein localises to the secreted. Functionally, potent stimulator of insulin secretion and relatively poor inhibitor of gastric acid secretion. This chain is Gastric inhibitory polypeptide (GIP), found in Homo sapiens (Human).